Reading from the N-terminus, the 320-residue chain is Ferrochelatase (320 aa).

The Fe cation site is built by His194 and Glu275.

Belongs to the ferrochelatase family. As to quaternary structure, monomer.

It is found in the cytoplasm. The enzyme catalyses heme b + 2 H(+) = protoporphyrin IX + Fe(2+). The protein operates within porphyrin-containing compound metabolism; protoheme biosynthesis; protoheme from protoporphyrin-IX: step 1/1. Functionally, catalyzes the ferrous insertion into protoporphyrin IX. In Salmonella typhi, this protein is Ferrochelatase.